A 332-amino-acid chain; its full sequence is L-lactate dehydrogenase A chain (332 aa).

At alanine 2 the chain carries N-acetylalanine. Lysine 5 carries the post-translational modification N6-acetyllysine; alternate. Lysine 5 is modified (N6-succinyllysine; alternate). Lysine 14 is subject to N6-acetyllysine. 29 to 57 (GAVGMACAISILMKELADEIALVDVMEDK) is an NAD(+) binding site. N6-acetyllysine; alternate is present on lysine 57. Residue lysine 57 forms a Glycyl lysine isopeptide (Lys-Gly) (interchain with G-Cter in SUMO2); alternate linkage. N6-acetyllysine is present on lysine 81. Position 99 (arginine 99) interacts with NAD(+). Arginine 106 provides a ligand contact to substrate. The residue at position 118 (lysine 118) is an N6-acetyllysine; alternate. Lysine 118 carries the post-translational modification N6-succinyllysine; alternate. N6-acetyllysine is present on lysine 126. Asparagine 138 is a binding site for NAD(+). Residues asparagine 138 and arginine 169 each coordinate substrate. Histidine 193 (proton acceptor) is an active-site residue. Lysine 224 and lysine 232 each carry N6-acetyllysine. Tyrosine 239 is subject to Phosphotyrosine. Lysine 243 is modified (N6-acetyllysine). Residue threonine 248 participates in substrate binding. Threonine 309 carries the post-translational modification Phosphothreonine. N6-acetyllysine; alternate is present on lysine 318. Lysine 318 is subject to N6-succinyllysine; alternate. Threonine 322 carries the phosphothreonine modification.

It belongs to the LDH/MDH superfamily. LDH family. Homotetramer. Interacts with PTEN upstream reading frame protein MP31. Post-translationally, ISGylated.

The protein resides in the cytoplasm. It catalyses the reaction (S)-lactate + NAD(+) = pyruvate + NADH + H(+). It participates in fermentation; pyruvate fermentation to lactate; (S)-lactate from pyruvate: step 1/1. Its function is as follows. Interconverts simultaneously and stereospecifically pyruvate and lactate with concomitant interconversion of NADH and NAD(+). This Sus scrofa (Pig) protein is L-lactate dehydrogenase A chain (LDHA).